The chain runs to 147 residues: Angiogenin (147 aa).

The first 24 residues, 1–24 (MVMGLGVLLLVFVLGLGLTPPTLA), serve as a signal peptide directing secretion. Position 25 is a pyrrolidone carboxylic acid (Gln25). The active-site Proton acceptor is His37. TRNA is bound by residues Arg45 and Asp46. 3 disulfide bridges follow: Cys50–Cys105, Cys63–Cys116, and Cys81–Cys131. The Nucleolar localization signal signature appears at 55-59 (RRRGL). Positions 105 and 127 each coordinate tRNA. The Proton donor role is filled by His138.

It belongs to the pancreatic ribonuclease family. Homodimer. Interacts with RNH1; inhibiting ANG ribonuclease activity. Interacts with PCNA.

It is found in the secreted. Its subcellular location is the nucleus. The protein localises to the nucleolus. It localises to the cytoplasm. The protein resides in the stress granule. Has weak tRNA ribonuclease activity by itself due to partial autoinhibition by its C-terminus, which folds into a short alpha-helix that partially occludes the substrate-binding site. In absence of stress, the ribonuclease activity is inhibited by RNH1 in the cytoplasm. In response to stress, dissociates from RNH1 in the cytoplasm and associates with cytoplasmic ribosomes with vacant A-sites: ribosomes directly activate the tRNA ribonuclease activity of ANG by refolding the C-terminal alpha-helix. In response to stress, the angiogenic activity of ANG is inhibited by RNH1 in the nucleus. Secreted ribonuclease that can either promote or restrict cell proliferation of target cells, depending on the context. Endocytosed in target cells via its receptor PLXNB2 and translocates to the cytoplasm or nucleus. Under stress conditions, localizes to the cytoplasm and promotes the assembly of stress granules (SGs): specifically cleaves a subset of tRNAs within anticodon loops to produce tRNA-derived stress-induced fragments (tiRNAs), resulting in translation repression and inhibition of cell proliferation. tiRNas also prevent formation of apoptosome, thereby promoting cell survival. Preferentially cleaves RNAs between a pyrimidine and an adenosine residue, suggesting that it cleaves the anticodon loop of tRNA(Ala) (32-UUAGCAU-38) after positions 33 and 36. Cleaves a subset of tRNAs, including tRNA(Ala), tRNA(Glu), tRNA(Gly), tRNA(Lys), tRNA(Val), tRNA(His), tRNA(Asp) and tRNA(Sec). Under growth conditions and in differentiated cells, translocates to the nucleus and stimulates ribosomal RNA (rRNA) transcription, including that containing the initiation site sequences of 45S rRNA, thereby promoting cell growth and proliferation. Angiogenin induces vascularization of normal and malignant tissues via its ability to promote rRNA transcription. Involved in hematopoietic stem and progenitor cell (HSPC) growth and survival by promoting rRNA transcription in growth conditions and inhibiting translation in response to stress, respectively. Mediates the crosstalk between myeloid and intestinal epithelial cells to protect the intestinal epithelial barrier integrity: secreted by myeloid cells and promotes intestinal epithelial cells proliferation and survival. Also mediates osteoclast-endothelial cell crosstalk in growing bone: produced by osteoclasts and protects the neighboring vascular cells against senescence by promoting rRNA transcription. In Pan troglodytes (Chimpanzee), this protein is Angiogenin (ANG).